Reading from the N-terminus, the 93-residue chain is Pyrimidine/purine nucleoside phosphorylase (93 aa).

This sequence belongs to the nucleoside phosphorylase PpnP family.

The enzyme catalyses a purine D-ribonucleoside + phosphate = a purine nucleobase + alpha-D-ribose 1-phosphate. The catalysed reaction is adenosine + phosphate = alpha-D-ribose 1-phosphate + adenine. It carries out the reaction cytidine + phosphate = cytosine + alpha-D-ribose 1-phosphate. It catalyses the reaction guanosine + phosphate = alpha-D-ribose 1-phosphate + guanine. The enzyme catalyses inosine + phosphate = alpha-D-ribose 1-phosphate + hypoxanthine. The catalysed reaction is thymidine + phosphate = 2-deoxy-alpha-D-ribose 1-phosphate + thymine. It carries out the reaction uridine + phosphate = alpha-D-ribose 1-phosphate + uracil. It catalyses the reaction xanthosine + phosphate = alpha-D-ribose 1-phosphate + xanthine. Catalyzes the phosphorolysis of diverse nucleosides, yielding D-ribose 1-phosphate and the respective free bases. Can use uridine, adenosine, guanosine, cytidine, thymidine, inosine and xanthosine as substrates. Also catalyzes the reverse reactions. The sequence is that of Pyrimidine/purine nucleoside phosphorylase from Pseudomonas paraeruginosa (strain DSM 24068 / PA7) (Pseudomonas aeruginosa (strain PA7)).